The sequence spans 85 residues: Large ribosomal subunit protein bL27 (85 aa).

The disordered stretch occupies residues 1–20 (MAHKKAGGSTRNGRDSEAKR).

It belongs to the bacterial ribosomal protein bL27 family.

This chain is Large ribosomal subunit protein bL27, found in Serratia proteamaculans (strain 568).